Reading from the N-terminus, the 163-residue chain is NADH-quinone oxidoreductase subunit I (163 aa).

4Fe-4S ferredoxin-type domains are found at residues 54–84 (LRRYPNGEERCIACKLCEAVCPALAITIESD) and 94–123 (TRYDIDLTKCIFCGFCEEACPVDAIVETHI). Cys-64, Cys-67, Cys-70, Cys-74, Cys-103, Cys-106, Cys-109, and Cys-113 together coordinate [4Fe-4S] cluster.

It belongs to the complex I 23 kDa subunit family. In terms of assembly, NDH-1 is composed of 14 different subunits. Subunits NuoA, H, J, K, L, M, N constitute the membrane sector of the complex. [4Fe-4S] cluster serves as cofactor.

It is found in the cell inner membrane. The catalysed reaction is a quinone + NADH + 5 H(+)(in) = a quinol + NAD(+) + 4 H(+)(out). Its function is as follows. NDH-1 shuttles electrons from NADH, via FMN and iron-sulfur (Fe-S) centers, to quinones in the respiratory chain. The immediate electron acceptor for the enzyme in this species is believed to be ubiquinone. Couples the redox reaction to proton translocation (for every two electrons transferred, four hydrogen ions are translocated across the cytoplasmic membrane), and thus conserves the redox energy in a proton gradient. The protein is NADH-quinone oxidoreductase subunit I of Ralstonia nicotianae (strain ATCC BAA-1114 / GMI1000) (Ralstonia solanacearum).